Here is a 365-residue protein sequence, read N- to C-terminus: Sulfotransferase 2B1 (365 aa).

A 3'-phosphoadenylyl sulfate-binding site is contributed by 70–75 (KSGTTW). Residues tryptophan 98, tryptophan 103, and histidine 125 each contribute to the substrate site. The active-site Proton acceptor is histidine 125. 3'-phosphoadenylyl sulfate-binding positions include arginine 147, serine 155, tyrosine 210, 244–249 (STFSAM), and 274–276 (RKG). Residues 303–365 (GMPTFPWDED…ASETPHPRPS (63 aa)) form a disordered region. Positions 309 to 325 (WDEDPEEDGSPDPEPSP) are enriched in acidic residues. Serine 348 carries the post-translational modification Phosphoserine.

This sequence belongs to the sulfotransferase 1 family. Phosphorylated. In terms of tissue distribution, expressed in the stratum granulosum-stratum corneum junction in the skin (at protein level). Expressed highly in placenta, prostate and trachea and lower expression in the small intestine and lung.

It localises to the cytoplasm. It is found in the cytosol. The protein localises to the microsome. Its subcellular location is the nucleus. It catalyses the reaction an alcohol + 3'-phosphoadenylyl sulfate = an alkyl sulfate + adenosine 3',5'-bisphosphate + H(+). The catalysed reaction is 3beta-hydroxyandrost-5-en-17-one + 3'-phosphoadenylyl sulfate = dehydroepiandrosterone 3-sulfate + adenosine 3',5'-bisphosphate + H(+). The enzyme catalyses (24S)-hydroxycholesterol + 3'-phosphoadenylyl sulfate = (24S)-hydroxycholesterol 3-sulfate + adenosine 3',5'-bisphosphate + H(+). It carries out the reaction cholesterol + 3'-phosphoadenylyl sulfate = cholesterol sulfate + adenosine 3',5'-bisphosphate + H(+). It catalyses the reaction pregnenolone + 3'-phosphoadenylyl sulfate = pregnenolone sulfate + adenosine 3',5'-bisphosphate + H(+). Its function is as follows. Sulfotransferase that utilizes 3'-phospho-5'-adenylyl sulfate (PAPS) as sulfonate donor to catalyze the sulfate conjugation. Responsible for the sulfation of cholesterol. Catalyzes sulfation of the 3beta-hydroxyl groups of steroids, such as, pregnenolone and dehydroepiandrosterone (DHEA). Preferentially sulfonates cholesterol, while it also has significant activity with pregnenolone and DHEA. Plays a role in epidermal cholesterol metabolism and in the regulation of epidermal proliferation and differentiation. Functionally, sulfonates pregnenolone but not cholesterol. The chain is Sulfotransferase 2B1 (SULT2B1) from Homo sapiens (Human).